Here is a 458-residue protein sequence, read N- to C-terminus: GTPase Der (458 aa).

EngA-type G domains are found at residues K9–Q171 and I197–S368. GTP contacts are provided by residues G15–S22, D62–M66, N123–D126, G203–S210, D250–I254, and N314–D317. Residues K369–K453 enclose the KH-like domain.

This sequence belongs to the TRAFAC class TrmE-Era-EngA-EngB-Septin-like GTPase superfamily. EngA (Der) GTPase family. In terms of assembly, associates with the 50S ribosomal subunit.

In terms of biological role, GTPase that plays an essential role in the late steps of ribosome biogenesis. The protein is GTPase Der of Helicobacter pylori (strain ATCC 700392 / 26695) (Campylobacter pylori).